A 301-amino-acid polypeptide reads, in one-letter code: GTPase Era (301 aa).

The 170-residue stretch at 4-173 (KAGFVALIGK…LECISEHLSP (170 aa)) folds into the Era-type G domain. Positions 12-19 (GKPNAGKS) are G1. 12 to 19 (GKPNAGKS) contributes to the GTP binding site. The segment at 38–42 (NATRK) is G2. Positions 64-67 (DTPG) are G3. GTP is bound by residues 64–68 (DTPGL) and 122–125 (SKID). Residues 122–125 (SKID) are G4. Residues 152–154 (LSA) are G5. The 77-residue stretch at 204–280 (LSDEIPYESD…FLNLQVIAQK (77 aa)) folds into the KH type-2 domain.

The protein belongs to the TRAFAC class TrmE-Era-EngA-EngB-Septin-like GTPase superfamily. Era GTPase family. As to quaternary structure, monomer.

Its subcellular location is the cytoplasm. It localises to the cell inner membrane. An essential GTPase that binds both GDP and GTP, with rapid nucleotide exchange. Plays a role in 16S rRNA processing and 30S ribosomal subunit biogenesis and possibly also in cell cycle regulation and energy metabolism. This Helicobacter acinonychis (strain Sheeba) protein is GTPase Era.